Here is a 425-residue protein sequence, read N- to C-terminus: Serine--tRNA ligase (425 aa).

231-233 (TAE) contributes to the L-serine binding site. 262–264 (RSE) contributes to the ATP binding site. Residue E285 coordinates L-serine. An ATP-binding site is contributed by 349 to 352 (EISS). L-serine is bound at residue S385.

The protein belongs to the class-II aminoacyl-tRNA synthetase family. Type-1 seryl-tRNA synthetase subfamily. In terms of assembly, homodimer. The tRNA molecule binds across the dimer.

It localises to the cytoplasm. It catalyses the reaction tRNA(Ser) + L-serine + ATP = L-seryl-tRNA(Ser) + AMP + diphosphate + H(+). The enzyme catalyses tRNA(Sec) + L-serine + ATP = L-seryl-tRNA(Sec) + AMP + diphosphate + H(+). It participates in aminoacyl-tRNA biosynthesis; selenocysteinyl-tRNA(Sec) biosynthesis; L-seryl-tRNA(Sec) from L-serine and tRNA(Sec): step 1/1. Its function is as follows. Catalyzes the attachment of serine to tRNA(Ser). Is also able to aminoacylate tRNA(Sec) with serine, to form the misacylated tRNA L-seryl-tRNA(Sec), which will be further converted into selenocysteinyl-tRNA(Sec). The sequence is that of Serine--tRNA ligase from Desulfosudis oleivorans (strain DSM 6200 / JCM 39069 / Hxd3) (Desulfococcus oleovorans).